The chain runs to 471 residues: Siroheme synthase (471 aa).

A precorrin-2 dehydrogenase /sirohydrochlorin ferrochelatase region spans residues 1 to 203 (MDYLPLFADI…GDWESAEKTL (203 aa)). NAD(+) contacts are provided by residues 22–23 (EV) and 43–44 (KN). S128 carries the phosphoserine modification. A uroporphyrinogen-III C-methyltransferase region spans residues 215–471 (GEIILVGAGP…DTKSSLINLA (257 aa)). P224 serves as a coordination point for S-adenosyl-L-methionine. The active-site Proton acceptor is the D247. K269 (proton donor) is an active-site residue. S-adenosyl-L-methionine is bound by residues 300–302 (GGD), I305, 330–331 (TA), M382, and A411.

The protein in the N-terminal section; belongs to the precorrin-2 dehydrogenase / sirohydrochlorin ferrochelatase family. This sequence in the C-terminal section; belongs to the precorrin methyltransferase family.

The enzyme catalyses uroporphyrinogen III + 2 S-adenosyl-L-methionine = precorrin-2 + 2 S-adenosyl-L-homocysteine + H(+). It catalyses the reaction precorrin-2 + NAD(+) = sirohydrochlorin + NADH + 2 H(+). It carries out the reaction siroheme + 2 H(+) = sirohydrochlorin + Fe(2+). It participates in cofactor biosynthesis; adenosylcobalamin biosynthesis; precorrin-2 from uroporphyrinogen III: step 1/1. It functions in the pathway cofactor biosynthesis; adenosylcobalamin biosynthesis; sirohydrochlorin from precorrin-2: step 1/1. The protein operates within porphyrin-containing compound metabolism; siroheme biosynthesis; precorrin-2 from uroporphyrinogen III: step 1/1. Its pathway is porphyrin-containing compound metabolism; siroheme biosynthesis; siroheme from sirohydrochlorin: step 1/1. It participates in porphyrin-containing compound metabolism; siroheme biosynthesis; sirohydrochlorin from precorrin-2: step 1/1. In terms of biological role, multifunctional enzyme that catalyzes the SAM-dependent methylations of uroporphyrinogen III at position C-2 and C-7 to form precorrin-2 via precorrin-1. Then it catalyzes the NAD-dependent ring dehydrogenation of precorrin-2 to yield sirohydrochlorin. Finally, it catalyzes the ferrochelation of sirohydrochlorin to yield siroheme. This is Siroheme synthase from Zymomonas mobilis subsp. mobilis (strain ATCC 31821 / ZM4 / CP4).